The sequence spans 120 residues: Ragulator complex protein LAMTOR4 homolog (120 aa).

Positions 93–120 (QNGVTTTTSSSSSNSVYNDASDSGAVLA) are disordered. Low complexity predominate over residues 97–107 (TTTTSSSSSNS).

Belongs to the LAMTOR4 family. In terms of assembly, part of the Ragulator complex composed of Lamtor3, Lamtor2, CG14184, CG14812, and Lamtor4.

The protein resides in the lysosome. In terms of biological role, regulator of the TOR pathway, a signaling cascade that promotes cell growth in response to growth factors, energy levels, and amino acids. As part of the Ragulator complex, may activate the TOR signaling cascade in response to amino acids. This is Ragulator complex protein LAMTOR4 homolog from Drosophila melanogaster (Fruit fly).